We begin with the raw amino-acid sequence, 353 residues long: RNA 3'-terminal phosphate cyclase (353 aa).

ATP contacts are provided by residues Gln100 and 285–289 (HAADQ). His311 functions as the Tele-AMP-histidine intermediate in the catalytic mechanism.

It belongs to the RNA 3'-terminal cyclase family. Type 1 subfamily.

The protein localises to the cytoplasm. It catalyses the reaction a 3'-end 3'-phospho-ribonucleotide-RNA + ATP = a 3'-end 2',3'-cyclophospho-ribonucleotide-RNA + AMP + diphosphate. Catalyzes the conversion of 3'-phosphate to a 2',3'-cyclic phosphodiester at the end of RNA. The mechanism of action of the enzyme occurs in 3 steps: (A) adenylation of the enzyme by ATP; (B) transfer of adenylate to an RNA-N3'P to produce RNA-N3'PP5'A; (C) and attack of the adjacent 2'-hydroxyl on the 3'-phosphorus in the diester linkage to produce the cyclic end product. The biological role of this enzyme is unknown but it is likely to function in some aspects of cellular RNA processing. The chain is RNA 3'-terminal phosphate cyclase from Nitrosospira multiformis (strain ATCC 25196 / NCIMB 11849 / C 71).